Reading from the N-terminus, the 295-residue chain is 33 kDa chaperonin (295 aa).

2 disulfides stabilise this stretch: C236–C238 and C269–C272.

Belongs to the HSP33 family. Post-translationally, under oxidizing conditions two disulfide bonds are formed involving the reactive cysteines. Under reducing conditions zinc is bound to the reactive cysteines and the protein is inactive.

It is found in the cytoplasm. Redox regulated molecular chaperone. Protects both thermally unfolding and oxidatively damaged proteins from irreversible aggregation. Plays an important role in the bacterial defense system toward oxidative stress. The sequence is that of 33 kDa chaperonin from Geobacter sp. (strain M21).